We begin with the raw amino-acid sequence, 564 residues long: Cytochrome c oxidase subunit 1 (564 aa).

The segment at 1 to 23 (MTAVAPRLENYAEPTRPAPTGGA) is disordered. A run of 7 helical transmembrane segments spans residues 43-63 (MMYI…ALLI), 83-103 (LFTL…VWGF), 122-142 (LNAF…AGFL), 171-191 (FWII…VNMI), 214-234 (IFVA…AALG), 259-279 (LFWF…FGIV), and 292-312 (FGYI…MAVW). His87 provides a ligand contact to Fe(II)-heme a. Cu cation is bound by residues His265 and Tyr269. Positions 265-269 (HPEVY) form a cross-link, 1'-histidyl-3'-tyrosine (His-Tyr). 2 residues coordinate Cu cation: His314 and His315. 2 consecutive transmembrane segments (helical) span residues 316–336 (MFVT…LISV) and 360–380 (MTWT…GIML). His398 provides a ligand contact to heme a3. Transmembrane regions (helical) follow at residues 399 to 419 (FHYT…YFWF), 434 to 454 (IHFW…HWVG), and 477 to 497 (ISTV…WNVF). His400 provides a ligand contact to Fe(II)-heme a.

It belongs to the heme-copper respiratory oxidase family. In terms of assembly, associates with subunits II, III and IV to form cytochrome c oxidase. Cu(2+) is required as a cofactor. The cofactor is heme.

The protein resides in the cell membrane. It carries out the reaction 4 Fe(II)-[cytochrome c] + O2 + 8 H(+)(in) = 4 Fe(III)-[cytochrome c] + 2 H2O + 4 H(+)(out). It participates in energy metabolism; oxidative phosphorylation. In terms of biological role, cytochrome c oxidase is the component of the respiratory chain that catalyzes the reduction of oxygen to water. Subunits 1-3 form the functional core of the enzyme complex. CO I is the catalytic subunit of the enzyme. Electrons originating in cytochrome c are transferred via the copper A center of subunit 2 and heme A of subunit 1 to the bimetallic center formed by heme A3 and copper B. This Corynebacterium diphtheriae (strain ATCC 700971 / NCTC 13129 / Biotype gravis) protein is Cytochrome c oxidase subunit 1 (ctaD).